The chain runs to 95 residues: Selenoprotein K (95 aa).

The chain crosses the membrane as a helical span at residues 20-42; the sequence is LSFLTDMFWGITDFIVMFFQSII. The tract at residues 48 to 95 is disordered; it reads RRGCQNSSSRTRFDDGRGPPGNPRRRMGRIDHNSGPNAPPMSGGGUGR. Sec93 is a non-standard amino acid (selenocysteine).

It belongs to the selenoprotein K family.

It localises to the endoplasmic reticulum membrane. The protein resides in the cell membrane. In terms of biological role, required for Ca(2+) flux in immune cells and plays a role in T-cell proliferation and in T-cell and neutrophil migration. Involved in endoplasmic reticulum-associated degradation (ERAD) of soluble glycosylated proteins. Required for cell surface expression of CD36 and involved in macrophage uptake of low-density lipoprotein and in foam cell formation. Required for palmitoylation. The chain is Selenoprotein K (selenok) from Xenopus tropicalis (Western clawed frog).